We begin with the raw amino-acid sequence, 491 residues long: Glutamate--tRNA ligase (491 aa).

The 'HIGH' region signature appears at 13–23 (PSPTGFLHIGN). Zn(2+) is bound by residues Cys-110, Cys-112, Cys-137, and His-139. The 'KMSKS' region signature appears at 254–258 (KLSKR). Residue Lys-257 coordinates ATP.

This sequence belongs to the class-I aminoacyl-tRNA synthetase family. Glutamate--tRNA ligase type 1 subfamily. As to quaternary structure, monomer. Zn(2+) is required as a cofactor.

Its subcellular location is the cytoplasm. The enzyme catalyses tRNA(Glu) + L-glutamate + ATP = L-glutamyl-tRNA(Glu) + AMP + diphosphate. Its function is as follows. Catalyzes the attachment of glutamate to tRNA(Glu) in a two-step reaction: glutamate is first activated by ATP to form Glu-AMP and then transferred to the acceptor end of tRNA(Glu). The sequence is that of Glutamate--tRNA ligase from Listeria monocytogenes serovar 1/2a (strain ATCC BAA-679 / EGD-e).